Consider the following 488-residue polypeptide: Glutamyl-tRNA(Gln) amidotransferase subunit A (488 aa).

Catalysis depends on charge relay system residues lysine 76 and serine 152. The active-site Acyl-ester intermediate is serine 176.

Belongs to the amidase family. GatA subfamily. Heterotrimer of A, B and C subunits.

The catalysed reaction is L-glutamyl-tRNA(Gln) + L-glutamine + ATP + H2O = L-glutaminyl-tRNA(Gln) + L-glutamate + ADP + phosphate + H(+). Functionally, allows the formation of correctly charged Gln-tRNA(Gln) through the transamidation of misacylated Glu-tRNA(Gln) in organisms which lack glutaminyl-tRNA synthetase. The reaction takes place in the presence of glutamine and ATP through an activated gamma-phospho-Glu-tRNA(Gln). This Oceanobacillus iheyensis (strain DSM 14371 / CIP 107618 / JCM 11309 / KCTC 3954 / HTE831) protein is Glutamyl-tRNA(Gln) amidotransferase subunit A.